A 146-amino-acid chain; its full sequence is BCL7-like protein (146 aa).

The disordered stretch occupies residues 59–146 (MAPPKIKEVK…RDAEMTSKQP (88 aa)). Polar residues-rich tracts occupy residues 75–90 (NQVP…TSVT) and 113–134 (DSNQ…TDFS). Residues 135-146 (SMRDAEMTSKQP) are compositionally biased toward basic and acidic residues.

The protein belongs to the BCL7 family. As to expression, ubiquitous.

It is found in the nucleus. Functionally, required for the terminal differentiation of seam cells, and the differentiation of distal tip cells important for normal somatic gonad and germ cell development. Plays a role in the Wnt signaling pathway, regulating the expression of beta-catenin homologs wrm-1, bar-1 and sys-1, and the localization of wrm-1 and the wnt signaling pathway component pop-1 during asymmetric cell division of seam cells and the Z-cell lineage of the somatic gonad, respectively. May have a pro-apoptotic role, possibly linked to the negative regulation of expression of anti-apoptotic factor ced-9. The sequence is that of BCL7-like protein from Caenorhabditis elegans.